A 455-amino-acid polypeptide reads, in one-letter code: Bleomycin hydrolase (455 aa).

Active-site residues include Cys73, His372, and Asn396.

This sequence belongs to the peptidase C1 family. As to quaternary structure, homooctamer.

It is found in the cytoplasm. It catalyses the reaction Inactivates bleomycin B2 (a cytotoxic glycometallopeptide) by hydrolysis of a carboxyamide bond of beta-aminoalanine, but also shows general aminopeptidase activity. The specificity varies somewhat with source, but amino acid arylamides of Met, Leu and Ala are preferred.. Its function is as follows. The normal physiological role of BLM hydrolase is unknown, but it catalyzes the inactivation of the antitumor drug BLM (a glycopeptide) by hydrolyzing the carboxamide bond of its B-aminoalaninamide moiety thus protecting normal and malignant cells from BLM toxicity. The sequence is that of Bleomycin hydrolase (BLMH) from Gallus gallus (Chicken).